The chain runs to 182 residues: Dynactin subunit 5 (182 aa).

N-acetylmethionine is present on Met-1.

Belongs to the dynactin subunits 5/6 family. Dynactin subunit 5 subfamily. Subunit of dynactin, a multiprotein complex part of a tripartite complex with dynein and a adapter, such as BICDL1, BICD2 or HOOK3. The dynactin complex is built around ACTR1A/ACTB filament and consists of an actin-related filament composed of a shoulder domain, a pointed end and a barbed end. Its length is defined by its flexible shoulder domain. The soulder is composed of 2 DCTN1 subunits, 4 DCTN2 and 2 DCTN3. The 4 DCNT2 (via N-terminus) bind the ACTR1A filament and act as molecular rulers to determine the length. The pointed end is important for binding dynein-dynactin cargo adapters. Consists of 4 subunits: ACTR10, DCNT4, DCTN5 and DCTN6. Within the complex DCTN6 forms a heterodimer with DCTN5. The barbed end is composed of a CAPZA1:CAPZB heterodimers, which binds ACTR1A/ACTB filament and dynactin and stabilizes dynactin. Interacts with N4BP2L1.

The protein localises to the cytoplasm. The protein resides in the cytoskeleton. Its subcellular location is the chromosome. It localises to the centromere. It is found in the kinetochore. Functionally, part of the dynactin complex that activates the molecular motor dynein for ultra-processive transport along microtubules. The chain is Dynactin subunit 5 from Homo sapiens (Human).